Reading from the N-terminus, the 312-residue chain is DNA primase small subunit PriS (312 aa).

Active-site residues include Asp88, Asp90, and Asp215.

It belongs to the eukaryotic-type primase small subunit family. In terms of assembly, heterodimer of a small subunit (PriS) and a large subunit (PriL). It depends on Mg(2+) as a cofactor. The cofactor is Mn(2+).

Functionally, catalytic subunit of DNA primase, an RNA polymerase that catalyzes the synthesis of short RNA molecules used as primers for DNA polymerase during DNA replication. The small subunit contains the primase catalytic core and has DNA synthesis activity on its own. Binding to the large subunit stabilizes and modulates the activity, increasing the rate of DNA synthesis while decreasing the length of the DNA fragments, and conferring RNA synthesis capability. The DNA polymerase activity may enable DNA primase to also catalyze primer extension after primer synthesis. May also play a role in DNA repair. This Pyrobaculum arsenaticum (strain DSM 13514 / JCM 11321 / PZ6) protein is DNA primase small subunit PriS.